The chain runs to 1228 residues: AT-rich interactive domain-containing protein 4B (1228 aa).

2 disordered regions span residues leucine 123 to lysine 167 and lysine 266 to glutamate 307. Phosphoserine occurs at positions 276, 295, and 296. Positions glutamate 277–phenylalanine 305 are enriched in acidic residues. An ARID domain is found at proline 306 to arginine 398. Glycyl lysine isopeptide (Lys-Gly) (interchain with G-Cter in SUMO2) cross-links involve residues lysine 428 and lysine 461. Residues glutamate 437–isoleucine 464 are compositionally biased toward basic and acidic residues. 6 disordered regions span residues glutamate 437–proline 466, proline 479–arginine 525, arginine 539–glycine 606, leucine 620–arginine 802, leucine 825–lysine 1129, and serine 1168–alanine 1204. Residue serine 482 is modified to Phosphoserine. Over residues aspartate 483–glutamate 511 the composition is skewed to basic and acidic residues. Basic residues predominate over residues proline 546–lysine 555. A compositionally biased stretch (basic and acidic residues) spans asparagine 556–serine 569. Residues serine 579, serine 581, and serine 588 each carry the phosphoserine modification. A compositionally biased stretch (basic and acidic residues) spans aspartate 596–glycine 606. Serine 630 bears the Phosphoserine mark. Basic and acidic residues-rich tracts occupy residues glutamate 635–leucine 667 and serine 691–glutamate 700. Lysine 664 is covalently cross-linked (Glycyl lysine isopeptide (Lys-Gly) (interchain with G-Cter in SUMO2)). Phosphoserine occurs at positions 691 and 703. Residues alanine 701–glutamate 713 are compositionally biased toward acidic residues. Residue threonine 706 is modified to Phosphothreonine. Residues valine 721–leucine 730 show a composition bias toward basic and acidic residues. Polar residues predominate over residues isoleucine 744–serine 753. 3 stretches are compositionally biased toward basic and acidic residues: residues glycine 755 to glutamate 765, leucine 825 to valine 843, and lysine 911 to glutamate 926. Over residues phenylalanine 927–asparagine 937 the composition is skewed to polar residues. The residue at position 930 (serine 930) is a Phosphoserine. At threonine 942 the chain carries Phosphothreonine. Residues glutamate 944–valine 965 are compositionally biased toward low complexity. Serine 945 is modified (phosphoserine). The span at glutamate 972–threonine 981 shows a compositional bias: basic and acidic residues. The span at serine 1003 to serine 1017 shows a compositional bias: low complexity. The span at lysine 1046–lysine 1064 shows a compositional bias: basic residues. Threonine 1066 carries the post-translational modification Phosphothreonine. Serine 1068, serine 1069, serine 1071, and serine 1075 each carry phosphoserine. Basic and acidic residues predominate over residues lysine 1112 to serine 1124. Residues glutamate 1141–glutamate 1186 adopt a coiled-coil conformation. Residues alanine 1188–alanine 1204 are compositionally biased toward low complexity.

Component of a Sin3A corepressor complex consisting of SIN3A, SAP130, SUDS3/SAP45, SAP180, HDAC1 and HDAC2. Interacts with ARID4A. Interacts with AR.

Its subcellular location is the nucleus. Its function is as follows. Acts as a transcriptional repressor. May function in the assembly and/or enzymatic activity of the Sin3A corepressor complex or in mediating interactions between the complex and other regulatory complexes. Plays a role in the regulation of epigenetic modifications at the PWS/AS imprinting center near the SNRPN promoter, where it might function as part of a complex with RB1 and ARID4A. Involved in spermatogenesis, together with ARID4A, where it functions as a transcriptional coactivator for AR (androgen receptor) and enhances expression of genes required for sperm maturation. Regulates expression of the tight junction protein CLDN3 in the testis, which is important for integrity of the blood-testis barrier. Plays a role in myeloid homeostasis where it regulates the histone methylation state of bone marrow cells and expression of various genes involved in hematopoiesis. May function as a leukemia suppressor. This is AT-rich interactive domain-containing protein 4B (Arid4b) from Rattus norvegicus (Rat).